The sequence spans 196 residues: Holliday junction resolvase RecU (196 aa).

Positions 82, 84, 97, and 116 each coordinate Mg(2+).

Belongs to the RecU family. It depends on Mg(2+) as a cofactor.

Its subcellular location is the cytoplasm. It catalyses the reaction Endonucleolytic cleavage at a junction such as a reciprocal single-stranded crossover between two homologous DNA duplexes (Holliday junction).. Its function is as follows. Endonuclease that resolves Holliday junction intermediates in genetic recombination. Cleaves mobile four-strand junctions by introducing symmetrical nicks in paired strands. Promotes annealing of linear ssDNA with homologous dsDNA. Required for DNA repair, homologous recombination and chromosome segregation. The protein is Holliday junction resolvase RecU of Oceanobacillus iheyensis (strain DSM 14371 / CIP 107618 / JCM 11309 / KCTC 3954 / HTE831).